We begin with the raw amino-acid sequence, 348 residues long: Rhodopsin (348 aa).

At Met1 the chain carries N-acetylmethionine. Topologically, residues 1-36 (MNGTEGPNFYVPFSNKTGVVRSPFEFPQYYLAEPWQ) are extracellular. 2 N-linked (GlcNAc...) asparagine glycosylation sites follow: Asn2 and Asn15. The helical transmembrane segment at 37 to 61 (FSMLAAYMFLLIVLGFPINFLTLYV) threads the bilayer. Over 62–73 (TVQHKKLRTPLN) the chain is Cytoplasmic. Residues 74 to 96 (YILLNLAVADLFMVFGGFTTTLY) traverse the membrane as a helical segment. The Extracellular portion of the chain corresponds to 97–110 (TSLHGYFVFGPTGC). A disulfide bridge links Cys110 with Cys187. Residues 111-133 (NLEGFFATLGGEIALWSLVVLAI) traverse the membrane as a helical segment. The 'Ionic lock' involved in activated form stabilization signature appears at 134-136 (ERY). The Cytoplasmic portion of the chain corresponds to 134-152 (ERYVVVCKPMSNFRFGENH). Residues 153-173 (AIMGVGFTWVMALACAAPPLV) form a helical membrane-spanning segment. The Extracellular segment spans residues 174–202 (GWSRYIPEGMQCSCGIDYYTLKPEVNNES). Glu201 contributes to the Zn(2+) binding site. The helical transmembrane segment at 203 to 224 (FVIYMFVVHFTIPMIVIFFCYG) threads the bilayer. Residues 225–252 (QLVFTVKEAAAQQQESATTQKAEKEVTR) lie on the Cytoplasmic side of the membrane. Residues 253–274 (MVIIMVIAFLICWVPYASVAFY) form a helical membrane-spanning segment. Residues 275–286 (IFTHQGSNFGPI) lie on the Extracellular side of the membrane. Gln279 is a binding site for Zn(2+). Residues 287-308 (FMTLPAFFAKAASIYNPVIYIM) form a helical membrane-spanning segment. Lys296 carries the N6-(retinylidene)lysine modification. Residues 309–348 (MNKQFRTCMITTLCCGKNPLGDDEVSASASKTETSQVAPA) are Cytoplasmic-facing. S-palmitoyl cysteine attachment occurs at residues Cys322 and Cys323. Residues 330 to 348 (DDEVSASASKTETSQVAPA) are interaction with SAG. Residues Ser334 and Ser338 each carry the phosphoserine modification. A phosphothreonine mark is found at Thr340 and Thr342. Ser343 is modified (phosphoserine).

It belongs to the G-protein coupled receptor 1 family. Opsin subfamily. Homodimer. May form a complex composed of RHO, GRK1 and RCVRN in a Ca(2+)-dependent manner; RCVRN prevents the interaction between GRK1 and RHO. Interacts with GRK1. Interacts (phosphorylated form) with SAG. Interacts with GNAT1. Interacts with GNAT3. SAG and G-proteins compete for a common binding site. Interacts with PRCD; the interaction promotes PRCD stability. Forms a complex with ASAP1 and ARF4. Forms a complex with ASAP1, RAB11A, Rabin8/RAB3IP, ARF4 and RAB11FIP3; the complex regulates Golgi-to-cilia rhodopsin/RHO transport in photoreceptors. In terms of processing, phosphorylated on some or all of the serine and threonine residues present in the C-terminal region. Post-translationally, contains one covalently linked retinal chromophore. Upon light absorption, the covalently bound 11-cis-retinal is converted to all-trans-retinal. After hydrolysis of the Schiff base and release of the covalently bound all-trans-retinal, active rhodopsin is regenerated by binding of a fresh molecule of 11-cis-retinal.

It is found in the membrane. The protein resides in the cell projection. The protein localises to the cilium. It localises to the photoreceptor outer segment. In terms of biological role, photoreceptor required for image-forming vision at low light intensity. Required for photoreceptor cell viability after birth. Light-induced isomerization of 11-cis to all-trans retinal triggers a conformational change that activates signaling via G-proteins. Subsequent receptor phosphorylation mediates displacement of the bound G-protein alpha subunit by the arrestin SAG and terminates signaling. The sequence is that of Rhodopsin (RHO) from Phoca vitulina (Harbor seal).